Consider the following 200-residue polypeptide: NADH-quinone oxidoreductase subunit C (200 aa).

Belongs to the complex I 30 kDa subunit family. In terms of assembly, NDH-1 is composed of 14 different subunits. Subunits NuoB, C, D, E, F, and G constitute the peripheral sector of the complex.

The protein resides in the cell inner membrane. The catalysed reaction is a quinone + NADH + 5 H(+)(in) = a quinol + NAD(+) + 4 H(+)(out). Functionally, NDH-1 shuttles electrons from NADH, via FMN and iron-sulfur (Fe-S) centers, to quinones in the respiratory chain. The immediate electron acceptor for the enzyme in this species is believed to be ubiquinone. Couples the redox reaction to proton translocation (for every two electrons transferred, four hydrogen ions are translocated across the cytoplasmic membrane), and thus conserves the redox energy in a proton gradient. This is NADH-quinone oxidoreductase subunit C from Burkholderia mallei (strain NCTC 10247).